An 89-amino-acid polypeptide reads, in one-letter code: Small ribosomal subunit protein uS15 (89 aa).

This sequence belongs to the universal ribosomal protein uS15 family. In terms of assembly, part of the 30S ribosomal subunit. Forms a bridge to the 50S subunit in the 70S ribosome, contacting the 23S rRNA.

One of the primary rRNA binding proteins, it binds directly to 16S rRNA where it helps nucleate assembly of the platform of the 30S subunit by binding and bridging several RNA helices of the 16S rRNA. Functionally, forms an intersubunit bridge (bridge B4) with the 23S rRNA of the 50S subunit in the ribosome. This is Small ribosomal subunit protein uS15 from Streptococcus gordonii (strain Challis / ATCC 35105 / BCRC 15272 / CH1 / DL1 / V288).